The chain runs to 612 residues: MIQVLLVTICLAVFPYQGSSIILESGNVNDYEVVYPRKVTALPKGAVQQKYEDAMQYEFTVNGEPVVLHLEKNKGLFSEDYSETHYSPDGREITTNPPVEDHCYYHGRIQNDADLTASISACDGLKGHFKLQGETYIIEPLKLPDSEAHAVFKYENVEKEDEAPKMCGVTQSNWESDESIKEDSQSNLTPAQQKYLNAKKYVKFFLVADHIMYLKYGRNLTTLRTRMFDTVNIVNQILQRINIHVALIGIEIWSKEDKIIVQSVPDVTLKLFATWRESVLLKRKNHDNAHLLTGINFNGPTAGLAYLGGICKPMYSAGIVQDHNKIHHLVAIAMAHEMGHNLGMDHDKDTCTCRAKACVMAGTLSCDASYLFSDCSRQEHRAFLIKNMPQCILKKPLKTDVVSPPVCGNYFVEVGEDCDCGSPATCRDPCCDAATCKLRQGAQCAEGLCCDQCRFKAAGTECRAATDECDMADLCTGRSAECTDRFQRNGQPCQNNNGYCYNRTCPTMNNQCIALFGPNAAVSQDACFQFNRQGNYYGYCRKEQNTKIACEPQNVKCGRLYCIDSSPAKKNPCNIIYSPNDEDKGMVLPGTKCADGMACNSNGQCVDVNRTY.

The first 20 residues, 1 to 20 (MIQVLLVTICLAVFPYQGSS), serve as a signal peptide directing secretion. A propeptide spanning residues 21 to 188 (IILESGNVND…SIKEDSQSNL (168 aa)) is cleaved from the precursor. The 197-residue stretch at 200-396 (KYVKFFLVAD…NMPQCILKKP (197 aa)) folds into the Peptidase M12B domain. The N-linked (GlcNAc...) asparagine glycan is linked to asparagine 219. Intrachain disulfides connect cysteine 311–cysteine 391, cysteine 351–cysteine 375, and cysteine 353–cysteine 358. Histidine 336 is a binding site for Zn(2+). The active site involves glutamate 337. Residues histidine 340 and histidine 346 each coordinate Zn(2+). The Disintegrin domain maps to 404 to 489 (PPVCGNYFVE…AECTDRFQRN (86 aa)). Residues valine 406, asparagine 409, phenylalanine 411, glutamate 413, glutamate 416, and aspartate 419 each contribute to the Ca(2+) site. 14 disulfide bridges follow: cysteine 407–cysteine 436, cysteine 418–cysteine 431, cysteine 420–cysteine 426, cysteine 430–cysteine 453, cysteine 444–cysteine 450, cysteine 449–cysteine 475, cysteine 462–cysteine 482, cysteine 469–cysteine 500, cysteine 493–cysteine 505, cysteine 512–cysteine 562, cysteine 527–cysteine 573, cysteine 540–cysteine 550, cysteine 557–cysteine 599, and cysteine 593–cysteine 605. The short motif at 468-470 (ECD) is the D/ECD-tripeptide element. Residues aspartate 470, methionine 471, aspartate 473, aspartate 484, and arginine 485 each contribute to the Ca(2+) site. Residue asparagine 502 is glycosylated (N-linked (GlcNAc...) asparagine). Asparagine 609 carries N-linked (GlcNAc...) asparagine glycosylation.

Belongs to the venom metalloproteinase (M12B) family. P-III subfamily. P-IIIc sub-subfamily. As to quaternary structure, homodimer; disulfide-linked. Requires Zn(2+) as cofactor. Expressed by the venom gland.

The protein localises to the secreted. Inhibited by EDTA and EGTA. Functionally, snake venom zinc metalloproteinase-disintegrin-like that potently activates prothrombin (F2). Does not elicit any hemorrhagic response. Barely inhibits collagen-induced platelet aggregation. Hydrolyzes the alpha-chain of fibrin and fibrinogen (FGA), without affecting the Bbeta- and gamma-chains. Induces apoptosis in cultured vascular endothelial cells. The chain is Zinc metalloproteinase-disintegrin-like HV1 from Protobothrops flavoviridis (Habu).